The sequence spans 341 residues: Platelet-activating factor receptor (341 aa).

The Extracellular portion of the chain corresponds to 1 to 16 (MEHNGSFRVDSEFRYT). Residue N4 is glycosylated (N-linked (GlcNAc...) asparagine). The chain crosses the membrane as a helical span at residues 17 to 38 (LFPIVYSVIFILGVVANGYVLW). Residues 39–54 (VFANLYPSKKLNEIKI) are Cytoplasmic-facing. A helical membrane pass occupies residues 55–74 (FMVNLTMADLLFLITLPLWI). Residues 75 to 91 (VYYYNEGDWILPNFLCN) are Extracellular-facing. Cysteines 90 and 173 form a disulfide. Residues 92-113 (VAGCLFFINTYCSVAFLGVITY) traverse the membrane as a helical segment. Over 114–133 (NRYQAVAYPIKTAQATTRKR) the chain is Cytoplasmic. Residues 134–155 (GISLSLIIWVSIVATASYFLAT) form a helical membrane-spanning segment. Residues 156 to 184 (DSTNLVPNKDGSGNITRCFEHYEPYSVPI) are Extracellular-facing. N169 carries N-linked (GlcNAc...) asparagine glycosylation. The chain crosses the membrane as a helical span at residues 185–205 (LVVHVFIAFCFFLVFFLIFYC). The Cytoplasmic segment spans residues 206-233 (NLVIIHTLLTQPMRQQRKAGVKRRALWM). The helical transmembrane segment at 234–254 (VCTVLAVFIICFVPHHVVQLP) threads the bilayer. Topologically, residues 255 to 275 (WTLAELGYQTNFHQAINDAHQ) are extracellular. Residues 276–295 (ITLCLLSTNCVLDPVIYCFL) traverse the membrane as a helical segment. Residues 296–341 (TKKFRKHLSEKFYSMRSSRKCSRATSDTCTEVIVPANQTPIVSLKN) are Cytoplasmic-facing.

The protein belongs to the G-protein coupled receptor 1 family. In terms of assembly, interacts with ARRB1. As to expression, found in a range of organs. Expressed most strongly in spleen, followed by skeletal muscle, lung and small intestine. Expressed at moderate levels in the heart. Expressed at relatively low levels in the brain, liver and kidney.

It is found in the cell membrane. In terms of biological role, receptor for platelet activating factor, a chemotactic phospholipid mediator that possesses potent inflammatory, smooth-muscle contractile and hypotensive activity. Seems to mediate its action via a G protein that activates a phosphatidylinositol-calcium second messenger system. The protein is Platelet-activating factor receptor (Ptafr) of Mus musculus (Mouse).